The chain runs to 293 residues: Putative ribose uptake protein RbsU (293 aa).

10 consecutive transmembrane segments (helical) span residues 5 to 24, 34 to 51, 58 to 80, 95 to 114, 121 to 138, 153 to 170, 177 to 199, 212 to 234, 241 to 263, and 273 to 292; these read ALLIGLGPLIGWGFFPTVAS, IIGATVGTLIFAIILAVV, TGTNLLFALLSGAGWGFGQIITF, TTAFQLLGASLWGVFALGNW, IIGFTALVVILIGARMTV, RAVVLLLIGEFGYWLYSA, IDGLTAFLPQAMGMVIVAVIYGF, ITWLQIISGFFFAFGALTYLISA, LATGFILSQTSVVLATLTGIYFL, and VITIIGLVLILVAASVTVFI.

This sequence belongs to the GRP transporter (TC 2.A.7.5) family.

The protein localises to the cell membrane. Could be involved in the uptake of ribose. The sequence is that of Putative ribose uptake protein RbsU (rbsU) from Staphylococcus aureus (strain COL).